We begin with the raw amino-acid sequence, 545 residues long: Chaperonin GroEL (545 aa).

ATP-binding positions include 29–32 (TLGP), 86–90 (DGTTT), G413, 476–478 (NAA), and D492.

Belongs to the chaperonin (HSP60) family. Forms a cylinder of 14 subunits composed of two heptameric rings stacked back-to-back. Interacts with the co-chaperonin GroES.

It is found in the cytoplasm. The catalysed reaction is ATP + H2O + a folded polypeptide = ADP + phosphate + an unfolded polypeptide.. In terms of biological role, together with its co-chaperonin GroES, plays an essential role in assisting protein folding. The GroEL-GroES system forms a nano-cage that allows encapsulation of the non-native substrate proteins and provides a physical environment optimized to promote and accelerate protein folding. The chain is Chaperonin GroEL from Shouchella clausii (strain KSM-K16) (Alkalihalobacillus clausii).